The sequence spans 464 residues: MKMWSGRFSQSLDPEFESWQRSLPFDKKLLRHEVAASGAHATALAKAGVLSSEELALIKSGLAQIARDGAPDADDPSIEDVHHFVESRLIEIAGEVGRKLHTGRSRNEQIATDLRLYVREQIDETTLLIADVIAALIERAESVGEAAMPSYTHLQRAEPVLIAHWLLAYAEMFFRDITRLADCRKRANLCPLGSAAVAGTFVALDRGYIATLLGFDAPTANSIDATSDRDFAIEFVQSLSVIGLHLSRMAEEMILFATTEFGFLQLPEQFATGSSAMPQKKNPDSLELVRGKSAALLAHAMQLAVTLKALPLAYNKDMQETQQPVFASAEECIAMLRITAGFLRAVKFNTAVMHTAASTGYMNAMAAAGYLVQQGIPFRRAHELIGAAVKLAVEKHCELHDLSADDLRNLGIAADDSFYAALQLPAVLAQKNVAGGTAPNQVSTALKAAKKKLIAIGEVQHVSA.

It belongs to the lyase 1 family. Argininosuccinate lyase subfamily.

It is found in the cytoplasm. The catalysed reaction is 2-(N(omega)-L-arginino)succinate = fumarate + L-arginine. It participates in amino-acid biosynthesis; L-arginine biosynthesis; L-arginine from L-ornithine and carbamoyl phosphate: step 3/3. The polypeptide is Argininosuccinate lyase (Koribacter versatilis (strain Ellin345)).